Consider the following 319-residue polypeptide: Serpentine receptor class X-43 (319 aa).

7 consecutive transmembrane segments (helical) span residues 28 to 48 (VVSMECLTGLFLLVAVIIGCF), 67 to 87 (AQLMACINSGSFSTLGVLLNI), 95 to 115 (YLFGNFSIFLLPVILISFLLM), 138 to 158 (IRTFIVFNWLLSLVAGSYLVV), 164 to 184 (FVFYHFGWLFAGSVSVKCGTL), 194 to 214 (TVLSITIVGLDVVTLVALMAF), and 267 to 287 (FFFTTSFSSNLLHVFDPVVVF).

Belongs to the G-protein coupled receptor 1 family. As to expression, expressed in ASI sensory neurons.

It localises to the cell membrane. It is found in the perikaryon. The protein localises to the cell projection. The protein resides in the cilium. In terms of biological role, receptor for the ascaroside pheromone icas#9 which suppresses exploratory forgaging behavior. In response to ascaroside icas#9, may furthermore play a role in the expression of genes in the TGF-beta signaling pathway, such as daf-7, and in insulin signaling pathway, such as daf-28, which may in turn contribute to exploratory behavior. The protein is Serpentine receptor class X-43 of Caenorhabditis elegans.